The sequence spans 1031 residues: Putative glycine dehydrogenase (decarboxylating), mitochondrial (1031 aa).

The N-terminal 49 residues, 1-49 (MFDSFMKRNQLALIMFRACSKLQYHGVNTSLSRHLFLAKRNLSISSACL), are a transit peptide targeting the mitochondrion. The residue at position 783 (lysine 783) is an N6-(pyridoxal phosphate)lysine.

The protein belongs to the GcvP family. The cofactor is pyridoxal 5'-phosphate.

The protein resides in the mitochondrion. The enzyme catalyses N(6)-[(R)-lipoyl]-L-lysyl-[glycine-cleavage complex H protein] + glycine + H(+) = N(6)-[(R)-S(8)-aminomethyldihydrolipoyl]-L-lysyl-[glycine-cleavage complex H protein] + CO2. In terms of biological role, the glycine cleavage system catalyzes the degradation of glycine. The P protein binds the alpha-amino group of glycine through its pyridoxal phosphate cofactor; CO(2) is released and the remaining methylamine moiety is then transferred to the lipoamide cofactor of the H protein. The polypeptide is Putative glycine dehydrogenase (decarboxylating), mitochondrial (gcv2) (Schizosaccharomyces pombe (strain 972 / ATCC 24843) (Fission yeast)).